Consider the following 494-residue polypeptide: Aldehyde dehydrogenase (494 aa).

An NAD(+)-binding site is contributed by 223–228; sequence GSTTAG. Catalysis depends on residues E245 and C279.

The protein belongs to the aldehyde dehydrogenase family.

The enzyme catalyses an aldehyde + NAD(+) + H2O = a carboxylate + NADH + 2 H(+). It participates in mycotoxin biosynthesis. Aldehyde dehydrogenase; part of the gene cluster that mediates the biosynthesis of the selective antifungal agent ascochitine, an o-quinone methide that plays a possible protective role against other microbial competitors in nature and is considered to be important for pathogenicity of legume-associated Didymella species. The pathway probably begins with the synthesis of a keto-aldehyde intermediate by the ascochitine non-reducing polyketide synthase pksAC from successive condensations of 4 malonyl-CoA units, presumably with a simple acetyl-CoA starter unit. Release of the keto-aldehyde intermediate is consistent with the presence of the C-terminal reductive release domain. The HR-PKS (orf7) probably makes a diketide starter unit which is passed to the non-reducing polyketide synthase pksAC for further extension, producing ascochital and ascochitine. The aldehyde dehydrogenase (orf1), the 2-oxoglutarate-dependent dioxygenase (orf3) and the dehydrogenase (orf9) are probably involved in subsequent oxidations of methyl groups to the carboxylic acid of the heterocyclic ring. The ascochitine gene cluster also includes a gene encoding a short peptide with a cupin domain (orf2) that is often found in secondary metabolite gene clusters and which function has still to be determined. The chain is Aldehyde dehydrogenase from Didymella fabae (Leaf and pod spot disease fungus).